Here is a 950-residue protein sequence, read N- to C-terminus: Glycine dehydrogenase (decarboxylating) (950 aa).

Lysine 698 is modified (N6-(pyridoxal phosphate)lysine).

The protein belongs to the GcvP family. The glycine cleavage system is composed of four proteins: P, T, L and H. Pyridoxal 5'-phosphate is required as a cofactor.

The catalysed reaction is N(6)-[(R)-lipoyl]-L-lysyl-[glycine-cleavage complex H protein] + glycine + H(+) = N(6)-[(R)-S(8)-aminomethyldihydrolipoyl]-L-lysyl-[glycine-cleavage complex H protein] + CO2. In terms of biological role, the glycine cleavage system catalyzes the degradation of glycine. The P protein binds the alpha-amino group of glycine through its pyridoxal phosphate cofactor; CO(2) is released and the remaining methylamine moiety is then transferred to the lipoamide cofactor of the H protein. The protein is Glycine dehydrogenase (decarboxylating) of Neisseria gonorrhoeae (strain NCCP11945).